Consider the following 377-residue polypeptide: Queuine tRNA-ribosyltransferase (377 aa).

Catalysis depends on aspartate 89, which acts as the Proton acceptor. Substrate contacts are provided by residues 89–93 (DSGGF), aspartate 143, glutamine 187, and glycine 214. An RNA binding region spans residues 245–251 (GVGKPED). Aspartate 264 (nucleophile) is an active-site residue. Residues 269 to 273 (TRNAR) form an RNA binding; important for wobble base 34 recognition region. Positions 302, 304, 307, and 333 each coordinate Zn(2+).

This sequence belongs to the queuine tRNA-ribosyltransferase family. As to quaternary structure, homodimer. Within each dimer, one monomer is responsible for RNA recognition and catalysis, while the other monomer binds to the replacement base PreQ1. Zn(2+) serves as cofactor.

It carries out the reaction 7-aminomethyl-7-carbaguanine + guanosine(34) in tRNA = 7-aminomethyl-7-carbaguanosine(34) in tRNA + guanine. It participates in tRNA modification; tRNA-queuosine biosynthesis. Functionally, catalyzes the base-exchange of a guanine (G) residue with the queuine precursor 7-aminomethyl-7-deazaguanine (PreQ1) at position 34 (anticodon wobble position) in tRNAs with GU(N) anticodons (tRNA-Asp, -Asn, -His and -Tyr). Catalysis occurs through a double-displacement mechanism. The nucleophile active site attacks the C1' of nucleotide 34 to detach the guanine base from the RNA, forming a covalent enzyme-RNA intermediate. The proton acceptor active site deprotonates the incoming PreQ1, allowing a nucleophilic attack on the C1' of the ribose to form the product. After dissociation, two additional enzymatic reactions on the tRNA convert PreQ1 to queuine (Q), resulting in the hypermodified nucleoside queuosine (7-(((4,5-cis-dihydroxy-2-cyclopenten-1-yl)amino)methyl)-7-deazaguanosine). In Shewanella piezotolerans (strain WP3 / JCM 13877), this protein is Queuine tRNA-ribosyltransferase.